Consider the following 547-residue polypeptide: Chaperonin GroEL 1 (547 aa).

ATP-binding positions include 30 to 33 (TLGP), lysine 51, 87 to 91 (DGTTT), glycine 415, and aspartate 496.

It belongs to the chaperonin (HSP60) family. Forms a cylinder of 14 subunits composed of two heptameric rings stacked back-to-back. Interacts with the co-chaperonin GroES.

The protein resides in the cytoplasm. It carries out the reaction ATP + H2O + a folded polypeptide = ADP + phosphate + an unfolded polypeptide.. Its function is as follows. Together with its co-chaperonin GroES, plays an essential role in assisting protein folding. The GroEL-GroES system forms a nano-cage that allows encapsulation of the non-native substrate proteins and provides a physical environment optimized to promote and accelerate protein folding. The sequence is that of Chaperonin GroEL 1 from Gluconacetobacter diazotrophicus (strain ATCC 49037 / DSM 5601 / CCUG 37298 / CIP 103539 / LMG 7603 / PAl5).